We begin with the raw amino-acid sequence, 248 residues long: 3-deoxy-manno-octulosonate cytidylyltransferase (248 aa).

This sequence belongs to the KdsB family.

The protein localises to the cytoplasm. The catalysed reaction is 3-deoxy-alpha-D-manno-oct-2-ulosonate + CTP = CMP-3-deoxy-beta-D-manno-octulosonate + diphosphate. It functions in the pathway nucleotide-sugar biosynthesis; CMP-3-deoxy-D-manno-octulosonate biosynthesis; CMP-3-deoxy-D-manno-octulosonate from 3-deoxy-D-manno-octulosonate and CTP: step 1/1. It participates in bacterial outer membrane biogenesis; lipopolysaccharide biosynthesis. Its function is as follows. Activates KDO (a required 8-carbon sugar) for incorporation into bacterial lipopolysaccharide in Gram-negative bacteria. This is 3-deoxy-manno-octulosonate cytidylyltransferase from Chlorobium phaeobacteroides (strain BS1).